We begin with the raw amino-acid sequence, 361 residues long: Peptidyl-prolyl cis-trans isomerase CYP40 (361 aa).

The PPIase cyclophilin-type domain maps to 7–172 (FMDISIGGEL…QDVVIHDCGE (166 aa)). TPR repeat units follow at residues 212–245 (VDFVKAHGNEHFKKQDYKMALRKYRKALRYLDIC) and 298–331 (VKALFRQGQAYMALNNVDAAAESLEKALQFEPND).

It belongs to the cyclophilin-type PPIase family. In terms of tissue distribution, expressed at low levels in seedlings, roots, shoots, leaves, stems, inflorescences, flowers and siliques, with highest levels dividing tissues.

The protein localises to the cytoplasm. The enzyme catalyses [protein]-peptidylproline (omega=180) = [protein]-peptidylproline (omega=0). Binds cyclosporin A (CsA). CsA mediates some of its effects via an inhibitory action on PPIase. Its function is as follows. PPIases accelerate the folding of proteins. It catalyzes the cis-trans isomerization of proline imidic peptide bonds in oligopeptides. Involved in promoting the expression of the juvenile phase of vegetative development, and, to a lower extent, in regulating the positioning of floral buds, floral morphogenesis and the expression of HSPs. Collaboratively with RBL and ULT1, influences floral meristem (FM) determinacy in an AGAMOUS and SUPERMAN-dependent manner, thus contributing to the floral developmental homeostasis. This Arabidopsis thaliana (Mouse-ear cress) protein is Peptidyl-prolyl cis-trans isomerase CYP40.